The primary structure comprises 164 residues: Protein-export protein SecB (164 aa).

Belongs to the SecB family. Homotetramer, a dimer of dimers. One homotetramer interacts with 1 SecA dimer.

The protein resides in the cytoplasm. In terms of biological role, one of the proteins required for the normal export of preproteins out of the cell cytoplasm. It is a molecular chaperone that binds to a subset of precursor proteins, maintaining them in a translocation-competent state. It also specifically binds to its receptor SecA. In Herminiimonas arsenicoxydans, this protein is Protein-export protein SecB.